The chain runs to 152 residues: Type-1 angiotensin II receptor-associated protein (152 aa).

At 1-23 (MELPAVNLKVILLGHWLLTTWGC) the chain is on the extracellular side. Residues 24 to 44 (IVFSGSYAWANFTILALGVWA) traverse the membrane as a helical segment. Over 45 to 55 (VAQRDSIDAIS) the chain is Cytoplasmic. The chain crosses the membrane as a helical span at residues 56–76 (MFLGGLLATIFLDIVHISIFY). Topologically, residues 77-86 (PRAGLTDTGR) are extracellular. Residues 87–107 (FGAGMAILSLLLKPLSCCFVY) traverse the membrane as a helical segment. The Cytoplasmic segment spans residues 108–152 (HMYRQRGGFLGSSQDRSAYQTIDSAEAPANAFAVPEGRGQDARGY). 2 positions are modified to phosphoserine: Ser119 and Ser120. Residue Thr128 is modified to Phosphothreonine. Phosphoserine is present on Ser131.

Interacts with RACK1, and with the carboxy-terminal region of AGTR1.

It is found in the endoplasmic reticulum membrane. The protein localises to the golgi apparatus membrane. Its subcellular location is the cytoplasmic vesicle membrane. Appears to be a negative regulator of type-1 angiotensin II receptor-mediated signaling by regulating receptor internalization as well as mechanism of receptor desensitization such as phosphorylation. Also induces a decrease in cell proliferation and angiotensin II-stimulated transcriptional activity. This is Type-1 angiotensin II receptor-associated protein (AGTRAP) from Pongo abelii (Sumatran orangutan).